Reading from the N-terminus, the 235-residue chain is Mediator of RNA polymerase II transcription subunit 29 (235 aa).

Residues 1 to 14 (MMNQMGMMMQQQGV) are compositionally biased toward low complexity. The disordered stretch occupies residues 1–54 (MMNQMGMMMQQQGVGVPGGPGGVGGVGMPGPGGVGVAPGMMQSPQMQQAQQQQV). Residues 15–36 (GVPGGPGGVGGVGMPGPGGVGV) are compositionally biased toward gly residues. Residues 37–54 (APGMMQSPQMQQAQQQQV) are compositionally biased toward low complexity.

The protein belongs to the Mediator complex subunit 29 family. In terms of assembly, component of the Mediator complex.

The protein localises to the nucleus. In terms of biological role, component of the Mediator complex, a coactivator involved in the regulated transcription of nearly all RNA polymerase II-dependent genes. Mediator functions as a bridge to convey information from gene-specific regulatory proteins to the basal RNA polymerase II transcription machinery. Mediator is recruited to promoters by direct interactions with regulatory proteins and serves as a scaffold for the assembly of a functional preinitiation complex with RNA polymerase II and the general transcription factors. This Anopheles gambiae (African malaria mosquito) protein is Mediator of RNA polymerase II transcription subunit 29 (ix).